The following is a 350-amino-acid chain: Protein RecA (350 aa).

68–75 (GPESSGKT) is an ATP binding site.

The protein belongs to the RecA family.

The protein resides in the cytoplasm. Its function is as follows. Can catalyze the hydrolysis of ATP in the presence of single-stranded DNA, the ATP-dependent uptake of single-stranded DNA by duplex DNA, and the ATP-dependent hybridization of homologous single-stranded DNAs. It interacts with LexA causing its activation and leading to its autocatalytic cleavage. This Symbiobacterium thermophilum (strain DSM 24528 / JCM 14929 / IAM 14863 / T) protein is Protein RecA.